The sequence spans 219 residues: Claudin-6 (219 aa).

The Cytoplasmic segment spans residues 1-7 (MASTGLQ). The chain crosses the membrane as a helical span at residues 8–28 (ILGIVLTLLGWVNALVSCALP). Residues 29–81 (MWKVTAFIGNSIVVAQMVWEGLWMSCVVQSTGQMQCKVYDSLLALPQDLQAAR) lie on the Extracellular side of the membrane. A helical membrane pass occupies residues 82–102 (ALCVVTLLIVLLGLLVYLAGA). The Cytoplasmic portion of the chain corresponds to 103–116 (KCTTCVEDRNSKSR). A helical membrane pass occupies residues 117–137 (LVLISGIIFVISGVLTLIPVC). At 138 to 163 (WTAHSIIQDFYNPLVADAQKRELGAS) the chain is on the extracellular side. A helical membrane pass occupies residues 164 to 184 (LYLGWAASGLLLLGGGLLCCA). At 185–219 (CSSGGTQGPRHYMACYSTSVPHSRGPSEYPTKNYV) the chain is on the cytoplasmic side. Phosphoserine is present on residues serine 201, serine 203, serine 207, and serine 211. The interactions with TJP1, TJP2 and TJP3 stretch occupies residues 218 to 219 (YV).

It belongs to the claudin family. In terms of assembly, directly interacts with TJP1/ZO-1, TJP2/ZO-2 and TJP3/ZO-3. Interacts with CLDN1, CD81 and OCLN. Expressed mostly in embryonic tissues.

Its subcellular location is the cell junction. The protein resides in the tight junction. It localises to the cell membrane. Its function is as follows. Plays a major role in tight junction-specific obliteration of the intercellular space, through calcium-independent cell-adhesion activity. The protein is Claudin-6 (Cldn6) of Mus musculus (Mouse).